A 169-amino-acid polypeptide reads, in one-letter code: Cilia- and flagella-associated protein HOATZ (169 aa).

Disordered regions lie at residues 1–21, 52–89, and 144–169; these read METG…MCPP, SQLV…LASN, and KAKE…KTLD. Residues 75–89 show a composition bias toward polar residues; it reads SENSHSSQSFHLASN.

It belongs to the HOATZ family.

It localises to the cytoplasm. Its subcellular location is the cell projection. It is found in the cilium. In terms of biological role, required for motile ciliogenesis and flagellar genesis by mediating the maturation of the glycolytic enzyme ENO4. This is Cilia- and flagella-associated protein HOATZ from Homo sapiens (Human).